The primary structure comprises 124 residues: Large ribosomal subunit protein bL17 (124 aa).

It belongs to the bacterial ribosomal protein bL17 family. In terms of assembly, part of the 50S ribosomal subunit. Contacts protein L32.

The polypeptide is Large ribosomal subunit protein bL17 (Trichlorobacter lovleyi (strain ATCC BAA-1151 / DSM 17278 / SZ) (Geobacter lovleyi)).